The following is a 469-amino-acid chain: MAIVSLRDVAMVMVTVQVFARGYPETDLVVRLPGQPKVVFRQYAGYVDLDLNAGRSLFYYFVEAEKHPDTKPLTLWLNGGPGCSSVGGGAFTELGPFYPTGYGRGLRINSMSWNKASNLLFVDSPAGVGWSYSNRSSDYNAGDKSAASDMLVFLLRWFDKFPELKSHDLFLTGESYAGHYIPQLADAILSYNSRSSGFKFNIKGIAIGNPLLKLDRDIPAVYEFFWSHGMISEVVGRTIKIQCDFSHYTYAYPHNVSDACNDAIREAGDITTEYVNTFDVLPDLCYPSIALQELRLKQMATKMSMGVDVCMNYERQFYLNIPEVQMALHANRTNLPYSWSLCSNLLNYSAIDVNTNMLPTLKRIIQNKIPVRIFSGDQDSVVPFLGTRTIVGELANDLNFKTTVPYGVWFHKRQVGGWAIEYGNLLTFATVRGAAHAVAYTQPSRALHLFSTFLRGQRLPNKTDIAMHD.

An N-terminal signal peptide occupies residues 1–20; sequence MAIVSLRDVAMVMVTVQVFA. Intrachain disulfides connect Cys83–Cys342, Cys243–Cys260, and Cys285–Cys310. Residue Asn134 is glycosylated (N-linked (GlcNAc...) asparagine). Ser175 is a catalytic residue. Asn255 carries N-linked (GlcNAc...) asparagine glycosylation. 2 N-linked (GlcNAc...) asparagine glycosylation sites follow: Asn331 and Asn347. Residues Asp379 and His436 contribute to the active site. Asn461 carries an N-linked (GlcNAc...) asparagine glycan.

It belongs to the peptidase S10 family. Expressed in flowers.

It localises to the secreted. In terms of biological role, probable carboxypeptidase. This is Serine carboxypeptidase-like 41 (SCPL41) from Arabidopsis thaliana (Mouse-ear cress).